Here is a 503-residue protein sequence, read N- to C-terminus: MTDLPAQLERVHMVGIGGAGMSGIARILLARGGQVSGSDAKESRGVLALRARGAQVRIGHDAGALDLLPGGPTVVVTTHAAIPKDNPELVEAARRGIPVILRPAVLASLMQGHRTLLVSGTHGKTSTTSMLVVALQHCGFDPSFAVGGELNEAGTNAHHGSGDVFVAEADESDGSLLQYDPNVVVVTNVEADHLDYFGSPEAYIQVFDDFAARLSHGGLLVACLDDPGSAALAQRVAARGLPGVRVLGYGSAEDADGAFAPIDGVEVGARLLSFEARDVGGVLQFQLAGEQAPRTIRMNVPGRHMALNALAALLAAREAGADVDEILEGIAGFGGVHRRFQFTGREHGVRVFDDYAHHPTEVRAVLGAAADLVSQPHEADRRESEEPVRSGKVIVVFQPHLYSRTATFAEEFGHALDLADEVMVLDVYGAREEPLPGVSGALVALSVSKPVHYQPDLSQAPRQVAALASPGDVVITMGAGDVTMLGNQILDALRAAPHHHPSR.

120–126 (GTHGKTS) provides a ligand contact to ATP.

The protein belongs to the MurCDEF family.

The protein localises to the cytoplasm. The catalysed reaction is UDP-N-acetyl-alpha-D-muramate + L-alanine + ATP = UDP-N-acetyl-alpha-D-muramoyl-L-alanine + ADP + phosphate + H(+). Its pathway is cell wall biogenesis; peptidoglycan biosynthesis. Its function is as follows. Cell wall formation. This is UDP-N-acetylmuramate--L-alanine ligase from Rhodococcus opacus (strain B4).